A 441-amino-acid polypeptide reads, in one-letter code: Argininosuccinate lyase (441 aa).

The protein belongs to the lyase 1 family. Argininosuccinate lyase subfamily.

Its subcellular location is the cytoplasm. It catalyses the reaction 2-(N(omega)-L-arginino)succinate = fumarate + L-arginine. It participates in amino-acid biosynthesis; L-arginine biosynthesis; L-arginine from L-ornithine and carbamoyl phosphate: step 3/3. The protein is Argininosuccinate lyase of Thermoanaerobacter pseudethanolicus (strain ATCC 33223 / 39E) (Clostridium thermohydrosulfuricum).